A 304-amino-acid chain; its full sequence is Putative dihydroorotate dehydrogenase A (fumarate) (304 aa).

FMN contacts are provided by residues serine 21 and 45 to 46; that span reads KS. Residues lysine 45, 69–73, and asparagine 129 contribute to the substrate site; that span reads NAVGL. Asparagine 129 provides a ligand contact to FMN. The active-site Nucleophile is the cysteine 132. The FMN site is built by lysine 168 and isoleucine 194. 195–196 lines the substrate pocket; it reads NT. FMN contacts are provided by residues glycine 220, 246 to 247, and 268 to 269; these read GG and GS.

This sequence belongs to the dihydroorotate dehydrogenase family. Type 1 subfamily. Homodimer. Requires FMN as cofactor.

The protein localises to the cytoplasm. The catalysed reaction is (S)-dihydroorotate + fumarate = orotate + succinate. The protein operates within pyrimidine metabolism; UMP biosynthesis via de novo pathway. Its function is as follows. Catalyzes the conversion of dihydroorotate to orotate with fumarate as the electron acceptor. The sequence is that of Putative dihydroorotate dehydrogenase A (fumarate) (pyrD) from Pediococcus pentosaceus (strain ATCC 25745 / CCUG 21536 / LMG 10740 / 183-1w).